A 202-amino-acid chain; its full sequence is Dephospho-CoA kinase (202 aa).

In terms of domain architecture, DPCK spans 6–202 (KVSITGDLSS…EYFYALKGAL (197 aa)). 14 to 19 (SSGKTE) lines the ATP pocket.

Belongs to the CoaE family.

The protein resides in the cytoplasm. It catalyses the reaction 3'-dephospho-CoA + ATP = ADP + CoA + H(+). It participates in cofactor biosynthesis; coenzyme A biosynthesis; CoA from (R)-pantothenate: step 5/5. Catalyzes the phosphorylation of the 3'-hydroxyl group of dephosphocoenzyme A to form coenzyme A. The chain is Dephospho-CoA kinase from Chlamydia caviae (strain ATCC VR-813 / DSM 19441 / 03DC25 / GPIC) (Chlamydophila caviae).